We begin with the raw amino-acid sequence, 114 residues long: Class I hydrophobin 6 (114 aa).

A signal peptide spans 1–19; it reads MLFKQLILVATALTTLAVA. Intrachain disulfides connect Cys33–Cys93, Cys40–Cys87, Cys41–Cys74, and Cys94–Cys107. An N-linked (GlcNAc...) asparagine glycan is attached at Asn42.

Belongs to the fungal hydrophobin family. As to quaternary structure, self-assembles to form functional amyloid fibrils called rodlets. Self-assembly into fibrillar rodlets occurs spontaneously at hydrophobic:hydrophilic interfaces and the rodlets further associate laterally to form amphipathic monolayers.

It localises to the secreted. It is found in the cell wall. Aerial growth, conidiation, and dispersal of filamentous fungi in the environment rely upon a capability of their secreting small amphipathic proteins called hydrophobins (HPBs) with low sequence identity. Class I can self-assemble into an outermost layer of rodlet bundles on aerial cell surfaces, conferring cellular hydrophobicity that supports fungal growth, development and dispersal; whereas Class II form highly ordered films at water-air interfaces through intermolecular interactions but contribute nothing to the rodlet structure. In Pleurotus ostreatus (strain PC15) (Oyster mushroom), this protein is Class I hydrophobin 6.